The following is an 873-amino-acid chain: DNA mismatch repair protein MutS (873 aa).

Residues 1-34 (MAAIPTPRLHRGVTHLSRQTKSRARHPMSTPQHT) are disordered. Positions 8-26 (RLHRGVTHLSRQTKSRARH) are enriched in basic residues. 635-642 (GPNMGGKS) provides a ligand contact to ATP.

It belongs to the DNA mismatch repair MutS family.

In terms of biological role, this protein is involved in the repair of mismatches in DNA. It is possible that it carries out the mismatch recognition step. This protein has a weak ATPase activity. In Chromobacterium violaceum (strain ATCC 12472 / DSM 30191 / JCM 1249 / CCUG 213 / NBRC 12614 / NCIMB 9131 / NCTC 9757 / MK), this protein is DNA mismatch repair protein MutS.